Reading from the N-terminus, the 87-residue chain is HssA/B-like protein 7 (87 aa).

Polar residues predominate over residues 1–22 (MSILSALTSISNPMKSTKSSVA). Residues 1-23 (MSILSALTSISNPMKSTKSSVAN) form a disordered region.

The protein belongs to the hssA/B family.

The polypeptide is HssA/B-like protein 7 (hssl7) (Dictyostelium discoideum (Social amoeba)).